We begin with the raw amino-acid sequence, 138 residues long: Small ribosomal subunit protein uS11c (138 aa).

The protein belongs to the universal ribosomal protein uS11 family. Part of the 30S ribosomal subunit.

It localises to the plastid. The protein resides in the chloroplast. In Acorus calamus (Sweet flag), this protein is Small ribosomal subunit protein uS11c.